The primary structure comprises 424 residues: CinA-like protein (424 aa).

The protein belongs to the CinA family.

The protein is CinA-like protein of Shewanella halifaxensis (strain HAW-EB4).